The sequence spans 131 residues: MRHRKSGRQLNRNSSHRRAMFRNMASSLVRHEIIKTTVPKAKELRRVVEPLITLAKTDSVANRRLAFARIRDNDIVVKLFNELGPRFVSRAGGYTRILKCGSRAGDNAPVAYIELLDRSVSEPEPTTHTNA.

It belongs to the bacterial ribosomal protein bL17 family. Part of the 50S ribosomal subunit. Contacts protein L32.

This is Large ribosomal subunit protein bL17 from Hamiltonella defensa subsp. Acyrthosiphon pisum (strain 5AT).